The chain runs to 349 residues: Transcription repressor OFP5 (349 aa).

Disordered stretches follow at residues 1 to 20, 29 to 94, and 143 to 183; these read MMRW…GLSR, KLSG…KESN, and KQRC…GYSR. Low complexity predominate over residues 10 to 20; that stretch reads VSSSSSSGLSR. Residues 37 to 48 show a composition bias toward basic and acidic residues; the sequence is KPAKEKKQDEKA. Positions 49-62 are enriched in polar residues; it reads SQNISVKTSLSSTT. Basic and acidic residues-rich tracts occupy residues 63–94 and 143–167; these read RRSD…KESN and KQRC…DAGV. One can recognise an OVATE domain in the interval 286–345; that stretch reads VVKCSSDPQKDFRDSMIEMIMENGINHPEELKELLVCYLRLNTDEYHDMIISVFQQVHND.

As to quaternary structure, interacts with BLH1, BLH2, BLH3, BLH4, BLH6 and BLH10. As to expression, expressed in roots, rosette and cauline leaves, and flower buds.

The protein resides in the nucleus. Functionally, transcriptional repressor that regulates multiple aspects of plant growth and development through the regulation of BEL1-LIKE (BLH) and KNOX TALE (KNAT) homeodomain transcription factors. Required for embryo development. This Arabidopsis thaliana (Mouse-ear cress) protein is Transcription repressor OFP5 (OFP5).